A 431-amino-acid chain; its full sequence is Enolase (431 aa).

Residue Q167 participates in (2R)-2-phosphoglycerate binding. Residue E209 is the Proton donor of the active site. Mg(2+) contacts are provided by D246, E287, and D314. Residues K339, R368, S369, and K390 each coordinate (2R)-2-phosphoglycerate. K339 functions as the Proton acceptor in the catalytic mechanism.

This sequence belongs to the enolase family. It depends on Mg(2+) as a cofactor.

Its subcellular location is the cytoplasm. The protein localises to the secreted. It is found in the cell surface. It carries out the reaction (2R)-2-phosphoglycerate = phosphoenolpyruvate + H2O. The protein operates within carbohydrate degradation; glycolysis; pyruvate from D-glyceraldehyde 3-phosphate: step 4/5. Functionally, catalyzes the reversible conversion of 2-phosphoglycerate (2-PG) into phosphoenolpyruvate (PEP). It is essential for the degradation of carbohydrates via glycolysis. The sequence is that of Enolase from Prochlorococcus marinus (strain MIT 9303).